The following is a 488-amino-acid chain: Ribulose bisphosphate carboxylase large chain (488 aa).

Positions 127 and 177 each coordinate substrate. The active-site Proton acceptor is lysine 179. Position 181 (lysine 181) interacts with substrate. Mg(2+)-binding residues include lysine 205, aspartate 207, and glutamate 208. The residue at position 205 (lysine 205) is an N6-carboxylysine. Histidine 297 functions as the Proton acceptor in the catalytic mechanism. Arginine 298, histidine 330, and serine 382 together coordinate substrate.

Belongs to the RuBisCO large chain family. Type I subfamily. Heterohexadecamer of 8 large chains and 8 small chains. Requires Mg(2+) as cofactor.

Its subcellular location is the plastid. It is found in the chloroplast. It catalyses the reaction 2 (2R)-3-phosphoglycerate + 2 H(+) = D-ribulose 1,5-bisphosphate + CO2 + H2O. It carries out the reaction D-ribulose 1,5-bisphosphate + O2 = 2-phosphoglycolate + (2R)-3-phosphoglycerate + 2 H(+). RuBisCO catalyzes two reactions: the carboxylation of D-ribulose 1,5-bisphosphate, the primary event in carbon dioxide fixation, as well as the oxidative fragmentation of the pentose substrate in the photorespiration process. Both reactions occur simultaneously and in competition at the same active site. The polypeptide is Ribulose bisphosphate carboxylase large chain (rbcL) (Pyropia dentata (Red alga)).